A 1039-amino-acid polypeptide reads, in one-letter code: Potassium-transporting ATPase alpha chain 2 (1039 aa).

At 1 to 102 (MHQKTPEIYS…NSLTPPKQTP (102 aa)) the chain is on the cytoplasmic side. Residues 103–123 (EIVKFLKQMVGGFSILLWVGA) form a helical membrane-spanning segment. Topologically, residues 124 to 146 (FLCWIAYGIQYSSDKSASLNNVY) are lumenal. Residues 147–167 (LGCVLGLVVILTGIFAYYQEA) form a helical membrane-spanning segment. Over 168–303 (KSTNIMSSFN…NEKTPIAIEI (136 aa)) the chain is Cytoplasmic. The chain crosses the membrane as a helical span at residues 304-323 (EHFVHIVAGVAVSIGILFFI). The Lumenal portion of the chain corresponds to 324–335 (IAVSLKYQVLDS). A helical membrane pass occupies residues 336 to 353 (IIFLIGIIVANVPEGLLA). Residues 354 to 787 (TVTVTLSLTA…EEGRLIFDNL (434 aa)) are Cytoplasmic-facing. Catalysis depends on Asp-391, which acts as the 4-aspartylphosphate intermediate. Mg(2+) contacts are provided by Asp-732 and Asp-736. The helical transmembrane segment at 788 to 807 (KKTIAYSLTKNIAELCPFLI) threads the bilayer. At 808–817 (YIIVGLPLPI) the chain is on the lumenal side. Residues 818–838 (GTITILFIDLGTDIIPSIALA) traverse the membrane as a helical segment. Residues 839–858 (YEKAESDIMNRKPRHKNKDR) are Cytoplasmic-facing. The chain crosses the membrane as a helical span at residues 859 to 881 (LVNQPLAVYSYLHIGLMQALGAF). Over 882 to 933 (LVYFTVYAQEGFLPRTLINLRVEWEKDYVNDLKDSYGQEWTRYQREYLEWTG) the chain is Lumenal. Residues 934–953 (YTAFFVGILVQQIADLIIRK) form a helical membrane-spanning segment. Residues 954–967 (TRRNSIFQQGLFRN) lie on the Cytoplasmic side of the membrane. Phosphoserine; by PKA is present on Ser-958. Residues 968 to 986 (KVIWVGITSQIIIGLILSY) form a helical membrane-spanning segment. The Lumenal portion of the chain corresponds to 987 to 1001 (GLGSVTALSFTMLRA). A helical membrane pass occupies residues 1002–1022 (QYWFVAVPHAILIWVYDEVRK). Residues 1023–1039 (LFIRLYPGSWWDKNMYY) are Cytoplasmic-facing.

The protein belongs to the cation transport ATPase (P-type) (TC 3.A.3) family. Type IIC subfamily. The ATPase pump is composed of a catalytic alpha subunit and an auxiliary non-catalytic beta subunit. The alpha subunit pairs with the beta subunit of gastric H(+)/K(+) ATPase ATP4B or the beta subunit of Na(+)/K(+) ATPases ATP1B1 and ATP1B3; this interaction is required for the formation of a functionally active pump and its targeting at the plasma membrane. As to expression, expressed in airway epithelial cells (at protein level). Found in skin and kidney. Detected in prostate basal cells (at protein level). Expression is increased in benign prostate hyperplasia and tumor tissues (at protein level).

It localises to the apical cell membrane. The catalysed reaction is K(+)(out) + ATP + H2O + H(+)(in) = K(+)(in) + ADP + phosphate + 2 H(+)(out). The enzyme catalyses K(+)(out) + Na(+)(in) + ATP + H2O = K(+)(in) + Na(+)(out) + ADP + phosphate + H(+). Its activity is regulated as follows. The ATPase activity is regulated by monovalent cations and pH. Up-regulated by K(+) ions in a dose-dependent way. Down-regulated by Na(+) ions. Inhibited by Na(+)/K(+)-ATPase inhibitor ouabain and H(+)/K(+)-ATPase inhibitor SCH-28080 with an intermediate sensitivity to completely resistant Na(+)/K(+)-ATPases and highly sensitive H(+)/K(+)-ATPases. Its function is as follows. The catalytic subunit of a H(+)/K(+) ATPase and/or Na(+)/K(+) ATPase pump which transports K(+) ions in exchange for Na(+) and/or H(+) ions across the apical membrane of epithelial cells. Uses ATP as an energy source to pump K(+) ions into the cell while transporting Na(+) and/or H(+) ions to the extracellular compartment. Involved in the maintenance of electrolyte homeostasis through K(+) ion absorption in kidney and colon. In the airway epithelium, may play a primary role in mucus acidification regulating its viscosity and clearance. The chain is Potassium-transporting ATPase alpha chain 2 from Homo sapiens (Human).